Reading from the N-terminus, the 588-residue chain is Glutamate--tRNA ligase (588 aa).

A 'HIGH' region motif is present at residues 112–122; the sequence is PNPDFYLHLGS.

The protein belongs to the class-I aminoacyl-tRNA synthetase family. Glutamate--tRNA ligase type 2 subfamily.

It localises to the cytoplasm. It catalyses the reaction tRNA(Glu) + L-glutamate + ATP = L-glutamyl-tRNA(Glu) + AMP + diphosphate. Functionally, catalyzes the attachment of glutamate to tRNA(Glu) in a two-step reaction: glutamate is first activated by ATP to form Glu-AMP and then transferred to the acceptor end of tRNA(Glu). The polypeptide is Glutamate--tRNA ligase (Caldivirga maquilingensis (strain ATCC 700844 / DSM 13496 / JCM 10307 / IC-167)).